The sequence spans 432 residues: C(50) beta-cyclic carotenoids biosynthesis protein LbtBC (432 aa).

The interval 1-140 (MTSLYTTLNL…DDDEVRTPER (140 aa)) is beta-cyclase. 3 helical membrane passes run 4-24 (LYTT…LLAA), 36-56 (LIGV…FDNI), and 83-103 (FAYA…LTAS). The segment at 111 to 140 (GSPTVSGRGDALLTRAPEPGDDDEVRTPER) is disordered. The interval 141–432 (PGTPGLLTTL…IVLWSVLVWS (292 aa)) is elongase/hydratase. Transmembrane regions (helical) follow at residues 170 to 190 (YFLA…FFLV), 252 to 272 (ESSL…AKGL), 277 to 297 (IPFL…IVGW), 299 to 319 (IAGA…MLWG), 350 to 370 (AAVW…LAAA), 374 to 394 (ASGA…YVGV), and 409 to 429 (FLVL…WSVL).

Belongs to the UbiA prenyltransferase family. In terms of assembly, may form a complex with LbtA.

It is found in the cell membrane. The catalysed reaction is all-trans-lycopene + dimethylallyl diphosphate + H2O = dihydroisopentenyldehydrorhodopin + diphosphate. It catalyses the reaction isopentenyldehydrorhodopin + dimethylallyl diphosphate + H2O = dihydrobisanhydrobacterioruberin + diphosphate. It participates in carotenoid biosynthesis. Its function is as follows. Involved in the biosynthesis of C(50) beta-cyclic carotenoids. The elongase/hydratase domain catalyzes the elongation of lycopene by attaching a C(5) isoprene unit at C-2, as well as the hydroxylation of the previous end of the molecule. The enzyme acts at both ends of the substrate, and catalyzes the conversion of lycopene to the C(45) intermediate dihydroisopentenyldehydrorhodopin (DH-IDR) and the conversion of isopentenyldehydrorhodopin (IDR) to the C(50) carotenoid dihydrobisanhydrobacterioruberin (DH-BABR). The beta-cyclase domain may produce the C(50) beta-cyclic carotenoid C.p.450 from the C(50) carotenoid dihydrobisanhydrobacterioruberin (DH-BABR). The polypeptide is C(50) beta-cyclic carotenoids biosynthesis protein LbtBC (Dietzia sp. (strain CQ4)).